We begin with the raw amino-acid sequence, 58 residues long: Cecropin-B (58 aa).

A signal peptide spans 1 to 21 (ILSFVFACLLALSAVSAAPEP).

Belongs to the cecropin family.

The protein resides in the secreted. In terms of biological role, cecropins have lytic and antibacterial activity against several Gram-positive and Gram-negative bacteria. This Spodoptera litura (Asian cotton leafworm) protein is Cecropin-B (CECB).